The sequence spans 135 residues: MATAGHKGAPKTKVRRKEKKNVVAGQAHIKSTFNNTIIAITDPSGAVISWASAGTVGFKGSRKSTPFAAQMAAEAAGRRAMEHGMKRVDVFVKGPGSGRETAIRSLGAVGLEIGPISDVTPVPHNGCRPPKRRRV.

This sequence belongs to the universal ribosomal protein uS11 family. In terms of assembly, part of the 30S ribosomal subunit. Interacts with proteins S7 and S18. Binds to IF-3.

Its function is as follows. Located on the platform of the 30S subunit, it bridges several disparate RNA helices of the 16S rRNA. Forms part of the Shine-Dalgarno cleft in the 70S ribosome. The chain is Small ribosomal subunit protein uS11 from Cutibacterium acnes (strain DSM 16379 / KPA171202) (Propionibacterium acnes).